The primary structure comprises 233 residues: Type II methyltransferase M.MunI (233 aa).

It belongs to the MT-A70-like family.

It catalyses the reaction a 2'-deoxyadenosine in DNA + S-adenosyl-L-methionine = an N(6)-methyl-2'-deoxyadenosine in DNA + S-adenosyl-L-homocysteine + H(+). A methylase that recognizes the double-stranded sequence 5'-CAATTG-3', methylates A-3 on both strands, and protects the DNA from cleavage by the MunI endonuclease. The protein is Type II methyltransferase M.MunI of Mycoplasma sp.